The chain runs to 651 residues: Acetyl-coenzyme A synthetase (651 aa).

CoA-binding positions include 189–192 (RGGK), Thr-311, and Asn-335. Residues 387–389 (GEP), 411–416 (DTWWQT), Asp-500, and Arg-515 each bind ATP. Ser-523 is a binding site for CoA. Arg-526 serves as a coordination point for ATP. The Mg(2+) site is built by Val-537, His-539, and Val-542. Arg-586 contributes to the CoA binding site. N6-acetyllysine is present on Lys-611.

It belongs to the ATP-dependent AMP-binding enzyme family. The cofactor is Mg(2+). Acetylated. Deacetylation by the SIR2-homolog deacetylase activates the enzyme.

The enzyme catalyses acetate + ATP + CoA = acetyl-CoA + AMP + diphosphate. In terms of biological role, catalyzes the conversion of acetate into acetyl-CoA (AcCoA), an essential intermediate at the junction of anabolic and catabolic pathways. AcsA undergoes a two-step reaction. In the first half reaction, AcsA combines acetate with ATP to form acetyl-adenylate (AcAMP) intermediate. In the second half reaction, it can then transfer the acetyl group from AcAMP to the sulfhydryl group of CoA, forming the product AcCoA. This chain is Acetyl-coenzyme A synthetase, found in Brucella melitensis biotype 1 (strain ATCC 23456 / CCUG 17765 / NCTC 10094 / 16M).